We begin with the raw amino-acid sequence, 214 residues long: Quinolone resistance pentapeptide repeat protein QnrB96 (214 aa).

Pentapeptide repeat domains lie at 23–103 and 116–189; these read STFH…SFMN and ITNT…VRGV.

It belongs to the pentapeptide repeat protein family.

Confers reduced sensitivity to the fluoroquinolone antibiotic ciprofloxacin (five-fold increase in minimum inhibitory concentration) when expressed in E.coli. This Scandinavium goeteborgense protein is Quinolone resistance pentapeptide repeat protein QnrB96.